Consider the following 575-residue polypeptide: Melatonin-related receptor (575 aa).

Residues 1-30 (MGRTLAVPTPYGCIGCKLPQPDYPPALIVF) are Extracellular-facing. The chain crosses the membrane as a helical span at residues 31 to 51 (MFCAMVITIVVDLIGNSMVIL). The Cytoplasmic portion of the chain corresponds to 52–64 (AVSKNKKLRNSGN). A helical transmembrane segment spans residues 65–85 (VFVVSLSVADMLVAIYPYPLM). The Extracellular segment spans residues 86-103 (LHAMAIGGWDLSKLQCQM). C101 and C178 are oxidised to a cystine. A helical membrane pass occupies residues 104–124 (VGFITGLSVVGSIFNIMAIAI). The Cytoplasmic segment spans residues 125–143 (NRYCYICHSLQYERIFSVR). A helical transmembrane segment spans residues 144-164 (NTCIYLAVTWIMTVLAVLPNM). Topologically, residues 165–188 (YIGTIEYDPRTYTCIFNYVNNPAF) are extracellular. A helical membrane pass occupies residues 189–209 (AVTIVCIHFVLPLLIVGFCYV). Topologically, residues 210-239 (KIWTKVLAARDPAGQNPDNQLAEVRNFLTM) are cytoplasmic. Residues 240–260 (FVIFLLFAVCWCPINALTVLV) traverse the membrane as a helical segment. Topologically, residues 261-273 (AVNPKEMAGKIPN) are extracellular. A helical transmembrane segment spans residues 274–294 (WVYLAAYFIAYFNSCLNAVIY). At 295-575 (GVLNENFRRE…VDADSDEMAV (281 aa)) the chain is on the cytoplasmic side. Disordered stretches follow at residues 368–421 (VPLP…TVYP) and 446–474 (SSHP…TGYT). Polar residues predominate over residues 455-474 (PSKTAISPATSFPKPTTGYT).

This sequence belongs to the G-protein coupled receptor 1 family. Homodimer, and heterodimer with MTNR1A and MTNR1B. Interacts with KAT5. Interacts with RTN4 isoform A/NOGO-A. Interacts with TGFBR1.

It is found in the cell membrane. Functionally, g protein-coupled receptor that plays a role in numerous physiological processes including regulation of energy metabolism, neurite outgrowth or cell migration. Promotes self-renewal and neuronal differentiation of neural progenitor cells through activation of the NOTCH and WNT/beta-catenin signaling pathways. Modulates the KAT5-dependent glucocorticoid receptor signaling by modulating KAT5 subcellular compartmentalisation. Also plays a role in the activation TGFBR1 in the absence of TGFBR2 by interfering with FKBP1A binding to TGFBR1, leading to induction of both canonical and non-canonical SMAD signaling pathways resulting in inhibition of proliferation or promotion of migration. The protein is Melatonin-related receptor (GPR50) of Ovis aries (Sheep).